Consider the following 207-residue polypeptide: Peptidyl-tRNA hydrolase (207 aa).

Tyr14 serves as a coordination point for tRNA. The Proton acceptor role is filled by His19. Tyr64, Asn66, and Asn112 together coordinate tRNA.

It belongs to the PTH family. Monomer.

It localises to the cytoplasm. It catalyses the reaction an N-acyl-L-alpha-aminoacyl-tRNA + H2O = an N-acyl-L-amino acid + a tRNA + H(+). Functionally, hydrolyzes ribosome-free peptidyl-tRNAs (with 1 or more amino acids incorporated), which drop off the ribosome during protein synthesis, or as a result of ribosome stalling. Catalyzes the release of premature peptidyl moieties from peptidyl-tRNA molecules trapped in stalled 50S ribosomal subunits, and thus maintains levels of free tRNAs and 50S ribosomes. This is Peptidyl-tRNA hydrolase from Rhodopseudomonas palustris (strain HaA2).